The primary structure comprises 236 residues: uncharacterized protein (236 aa).

Residues 117–160 form the RPE1 insert domain; it reads RYLSKQTDRNEFITTAESYIGISKHKSTNITYKLPLKEQFCNMS.

This is an uncharacterized protein from Rickettsia prowazekii (strain Madrid E).